Consider the following 393-residue polypeptide: NAD(P)H-quinone oxidoreductase subunit H, chloroplastic (393 aa).

This sequence belongs to the complex I 49 kDa subunit family. In terms of assembly, NDH is composed of at least 16 different subunits, 5 of which are encoded in the nucleus.

Its subcellular location is the plastid. The protein resides in the chloroplast thylakoid membrane. It carries out the reaction a plastoquinone + NADH + (n+1) H(+)(in) = a plastoquinol + NAD(+) + n H(+)(out). The catalysed reaction is a plastoquinone + NADPH + (n+1) H(+)(in) = a plastoquinol + NADP(+) + n H(+)(out). NDH shuttles electrons from NAD(P)H:plastoquinone, via FMN and iron-sulfur (Fe-S) centers, to quinones in the photosynthetic chain and possibly in a chloroplast respiratory chain. The immediate electron acceptor for the enzyme in this species is believed to be plastoquinone. Couples the redox reaction to proton translocation, and thus conserves the redox energy in a proton gradient. This chain is NAD(P)H-quinone oxidoreductase subunit H, chloroplastic, found in Zea mays (Maize).